A 604-amino-acid chain; its full sequence is MGKKEVKKNKNEGDTPHIRTPIVCVLGHVDHGKTSLLDRIRGSSVVAGEAGAITQHIGATIVPIDSIMSMSGGMKNLNISIPGLLFIDTPGHHAFTTLRARGGALADMAIVVVDITEGFQPQTIEAIQILRNCKTPFVVAATKLDRIPGWRSTEKSPFLKSFAAQNERVTLLVETKVYDIVATLAEHGFSSERFDRVSDFARNLAIVPVSAHTGEGIPDLLMVLIGLAQRYMEEALTLTVDGPGSGTVLEVKEEKGLGATIDVILFDGTIRVGDEIAIATTEGVQTTKVRSLLQPRPMQEILVEDRFLRVKEVVAAAGVKVSAPGLDQVIAGSPVRVIGEDPEEVKTSIAKEMTEINVSLSPEGLIIKADTIGALEALCKELTAHEIPVMRAEVGQVSRHDVIEAETIKDPLYRVLIAFNTPVLPDAQDLLKEPAYAEMIQFFSGNVIYHILEDYLEWRNNLKRIMDQKRFEKIIFPAKILVLPGCVFRQNNPAVVGVRILSGTLRTGVNLVRRDGKKAGTLKSMQLRKENIQEAHAGDEVAISIEGATVGRQFDVEDELLVGIPERHVKVLETEMLSHLNEDAKEVLNEYTRLFRKENPFWGK.

A tr-type G domain is found at 18-232 (IRTPIVCVLG…VLIGLAQRYM (215 aa)). The G1 stretch occupies residues 27–34 (GHVDHGKT). 27-34 (GHVDHGKT) provides a ligand contact to GTP. A G2 region spans residues 52-56 (AITQH). Residues 88–91 (DTPG) are G3. Residues 88 to 92 (DTPGH) and 142 to 145 (TKLD) each bind GTP. A G4 region spans residues 142 to 145 (TKLD). Residues 210–212 (SAH) are G5.

It belongs to the TRAFAC class translation factor GTPase superfamily. Classic translation factor GTPase family. IF-2 subfamily.

Function in general translation initiation by promoting the binding of the formylmethionine-tRNA to ribosomes. Seems to function along with eIF-2. The chain is Probable translation initiation factor IF-2 from Methanospirillum hungatei JF-1 (strain ATCC 27890 / DSM 864 / NBRC 100397 / JF-1).